Consider the following 396-residue polypeptide: 3-amino-4-hydroxybenzoate 2-monooxygenase PtmB3 (396 aa).

FAD is bound by residues Ala19, 38–39 (EQ), and Arg112. Tyr217 (proton acceptor) is an active-site residue. Asp295 provides a ligand contact to FAD. The tract at residues 352 to 371 (RERGHEFHLPDGPQQRLRDR) is disordered.

This sequence belongs to the 6-hydroxynicotinate 3-monooxygenase family. FAD serves as cofactor.

The catalysed reaction is 3-amino-4-hydroxybenzoate + NADPH + O2 + H(+) = 3-amino-2,4-dihydroxybenzoate + NADP(+) + H2O. It participates in antibiotic biosynthesis. Part of a gene cluster involved in the biosynthesis of thioplatensimycin (thioPTM) and platensimycin (PTM), potent and selective inhibitors of bacterial and mammalian fatty acid synthases. Catalyzes the hydroxylation of 3-amino-4-hydroxybenzoate (3,4-AHBA) to 3-amino-2,4-dihydroxybenzoate (3,2,4-ADHBA). The sequence is that of 3-amino-4-hydroxybenzoate 2-monooxygenase PtmB3 from Streptomyces platensis.